The sequence spans 460 residues: MRKEYLLLDRVQGPLVVLSEVEGVAYDEIVEIKIANGETKKGRVVQLQGDKAVIQVFESTTGMSLQNTTISFTGKPLEISLSREVLGREFNGIGEAIDGRGEIYSLKKYNVNGRPINPVARKYPRNFIQTGISSIDCLTTLIRGQKLPIFSGNGMPHNELAAQIIRQAKIGGGDGEEKFAVVFAAMGIKHDDKEFFRKKFEEAGVIDRLVMFTNLADDPIVERITTPRAALTTAEYLAFEEGMHILVIMTDITNYCEALRELSSSREEVPSRKGYPGYLYSDLASLYERAGMMEGKDGSITQLPILTMPNDDITHPIPDLTGYITEGQIVLSRDLSGKNIYPPVNILPSLSRLMKDGIGEGYTREDHAEVSNQLFASYSYVQDVISLSQVIGEDELSPVDKIYMEFGREFESKFLNQGFEDNRSIDETLDLAWEILSILPKSQLDRVSPEALEKHYRGDK.

Belongs to the ATPase alpha/beta chains family.

Functionally, produces ATP from ADP in the presence of a proton gradient across the membrane. The V-type beta chain is a regulatory subunit. This chain is V-type ATP synthase beta chain 2, found in Clostridium tetani (strain Massachusetts / E88).